The following is a 216-amino-acid chain: Fucoxanthin-chlorophyll a-c binding protein C, chloroplastic (216 aa).

A chloroplast-targeting transit peptide spans 1-38 (MKSAIMAVASAAPGLRGPSAFNGAALTTSAKSSSAMKM). 3 consecutive transmembrane segments (helical) span residues 80 to 100 (IAMLAIAGHLTQQNARLPGML), 121 to 141 (IPPGGLAQIFGFIGFLELAVM), and 182 to 202 (GRAAQMGILALMVHEELNNKP).

The protein belongs to the fucoxanthin chlorophyll protein family. In terms of assembly, the LHC complex of chromophytic algae is composed of fucoxanthin, chlorophyll A and C bound non-covalently by fucoxanthin chlorophyll proteins (FCPs). The ratio of pigments in this LHC is; fucoxanthin: chlorophyll C: chlorophyll A; (0.6-1): (0.1-0.3): (1).

It is found in the plastid. It localises to the chloroplast thylakoid membrane. In terms of biological role, the light-harvesting complex (LHC) functions as a light receptor, it captures and delivers excitation energy to photosystems with which it is closely associated. Energy is transferred from the carotenoid and chlorophyll C (or B) to chlorophyll A and the photosynthetic reaction centers where it is used to synthesize ATP and reducing power. In Macrocystis pyrifera (Giant kelp), this protein is Fucoxanthin-chlorophyll a-c binding protein C, chloroplastic (FCPC).